A 200-amino-acid chain; its full sequence is NADH-quinone oxidoreductase subunit C (200 aa).

The protein belongs to the complex I 30 kDa subunit family. As to quaternary structure, NDH-1 is composed of 14 different subunits. Subunits NuoB, C, D, E, F, and G constitute the peripheral sector of the complex.

The protein resides in the cell inner membrane. The enzyme catalyses a quinone + NADH + 5 H(+)(in) = a quinol + NAD(+) + 4 H(+)(out). NDH-1 shuttles electrons from NADH, via FMN and iron-sulfur (Fe-S) centers, to quinones in the respiratory chain. The immediate electron acceptor for the enzyme in this species is believed to be ubiquinone. Couples the redox reaction to proton translocation (for every two electrons transferred, four hydrogen ions are translocated across the cytoplasmic membrane), and thus conserves the redox energy in a proton gradient. The protein is NADH-quinone oxidoreductase subunit C of Paraburkholderia xenovorans (strain LB400).